The following is a 354-amino-acid chain: S-adenosylmethionine:tRNA ribosyltransferase-isomerase (354 aa).

The protein belongs to the QueA family. Monomer.

The protein localises to the cytoplasm. The enzyme catalyses 7-aminomethyl-7-carbaguanosine(34) in tRNA + S-adenosyl-L-methionine = epoxyqueuosine(34) in tRNA + adenine + L-methionine + 2 H(+). The protein operates within tRNA modification; tRNA-queuosine biosynthesis. Functionally, transfers and isomerizes the ribose moiety from AdoMet to the 7-aminomethyl group of 7-deazaguanine (preQ1-tRNA) to give epoxyqueuosine (oQ-tRNA). This chain is S-adenosylmethionine:tRNA ribosyltransferase-isomerase, found in Pseudomonas syringae pv. syringae (strain B728a).